Consider the following 95-residue polypeptide: DNA-directed RNA polymerase subunit Rpo11 (95 aa).

Belongs to the archaeal Rpo11/eukaryotic RPB11/RPC19 RNA polymerase subunit family. As to quaternary structure, part of the RNA polymerase complex.

The protein localises to the cytoplasm. The enzyme catalyses RNA(n) + a ribonucleoside 5'-triphosphate = RNA(n+1) + diphosphate. In terms of biological role, DNA-dependent RNA polymerase (RNAP) catalyzes the transcription of DNA into RNA using the four ribonucleoside triphosphates as substrates. This is DNA-directed RNA polymerase subunit Rpo11 from Pyrococcus abyssi (strain GE5 / Orsay).